The sequence spans 145 residues: Probable 4-amino-4-deoxy-L-arabinose-phosphoundecaprenol flippase subunit ArnF (145 aa).

At 1-3 (MAH) the chain is on the cytoplasmic side. Residues 4 to 24 (LTLSIRGLLLALMSVLLISVA) form a helical membrane-spanning segment. Residues 25–61 (QLSMKWGMGTLNQLWSDLVMLWQGEDYSSLFSQALAP) are Periplasmic-facing. A helical transmembrane segment spans residues 62 to 82 (VMAVGAGLFCYALSMACWVMA). Over 83–89 (LKRLPLS) the chain is Cytoplasmic. A helical membrane pass occupies residues 90-110 (IAYPLLSLSYVLVYLGAVYLP). Over 111–114 (WLNE) the chain is Periplasmic. A helical membrane pass occupies residues 115–135 (PLSWVKGTGIFLILLGLIFVL). Residues 136-145 (PKKNQTSDKS) are Cytoplasmic-facing.

The protein belongs to the ArnF family. Heterodimer of ArnE and ArnF.

Its subcellular location is the cell inner membrane. It functions in the pathway bacterial outer membrane biogenesis; lipopolysaccharide biosynthesis. In terms of biological role, translocates 4-amino-4-deoxy-L-arabinose-phosphoundecaprenol (alpha-L-Ara4N-phosphoundecaprenol) from the cytoplasmic to the periplasmic side of the inner membrane. In Shewanella sediminis (strain HAW-EB3), this protein is Probable 4-amino-4-deoxy-L-arabinose-phosphoundecaprenol flippase subunit ArnF.